A 332-amino-acid chain; its full sequence is Biotin synthase (332 aa).

Residues 51–279 (YKVQLASLLS…RSRVRLSAGR (229 aa)) enclose the Radical SAM core domain. [4Fe-4S] cluster-binding residues include Cys66, Cys70, and Cys73. Residues Cys110, Cys142, Cys202, and Arg274 each contribute to the [2Fe-2S] cluster site.

This sequence belongs to the radical SAM superfamily. Biotin synthase family. In terms of assembly, homodimer. Requires [4Fe-4S] cluster as cofactor. [2Fe-2S] cluster serves as cofactor.

It catalyses the reaction (4R,5S)-dethiobiotin + (sulfur carrier)-SH + 2 reduced [2Fe-2S]-[ferredoxin] + 2 S-adenosyl-L-methionine = (sulfur carrier)-H + biotin + 2 5'-deoxyadenosine + 2 L-methionine + 2 oxidized [2Fe-2S]-[ferredoxin]. The protein operates within cofactor biosynthesis; biotin biosynthesis; biotin from 7,8-diaminononanoate: step 2/2. Catalyzes the conversion of dethiobiotin (DTB) to biotin by the insertion of a sulfur atom into dethiobiotin via a radical-based mechanism. This chain is Biotin synthase, found in Prochlorococcus marinus (strain SARG / CCMP1375 / SS120).